The following is a 445-amino-acid chain: Tubulin beta-1 chain (445 aa).

The short motif at 1–4 (MREI) is the MREI motif element. Residues Gln-11, Glu-69, Ser-138, Gly-142, Thr-143, Gly-144, Asn-204, and Asn-226 each contribute to the GTP site. Mg(2+) is bound at residue Glu-69. Residues 424–445 (QYQDATADEQGEFEEEGEEDEA) are disordered. Residues 429-445 (TADEQGEFEEEGEEDEA) are compositionally biased toward acidic residues. Glu-438 bears the 5-glutamyl polyglutamate mark.

The protein belongs to the tubulin family. Dimer of alpha and beta chains. A typical microtubule is a hollow water-filled tube with an outer diameter of 25 nm and an inner diameter of 15 nM. Alpha-beta heterodimers associate head-to-tail to form protofilaments running lengthwise along the microtubule wall with the beta-tubulin subunit facing the microtubule plus end conferring a structural polarity. Microtubules usually have 13 protofilaments but different protofilament numbers can be found in some organisms and specialized cells. Mg(2+) serves as cofactor. In terms of processing, some glutamate residues at the C-terminus are polyglycylated, resulting in polyglycine chains on the gamma-carboxyl group. Glycylation is mainly limited to tubulin incorporated into axonemes (cilia and flagella) whereas glutamylation is prevalent in neuronal cells, centrioles, axonemes, and the mitotic spindle. Both modifications can coexist on the same protein on adjacent residues, and lowering polyglycylation levels increases polyglutamylation, and reciprocally. The precise function of polyglycylation is still unclear. Post-translationally, some glutamate residues at the C-terminus are polyglutamylated, resulting in polyglutamate chains on the gamma-carboxyl group. Polyglutamylation plays a key role in microtubule severing by spastin (SPAST). SPAST preferentially recognizes and acts on microtubules decorated with short polyglutamate tails: severing activity by SPAST increases as the number of glutamates per tubulin rises from one to eight, but decreases beyond this glutamylation threshold. In terms of tissue distribution, highly expressed in skeletal muscle.

It localises to the cytoplasm. The protein resides in the cytoskeleton. In terms of biological role, tubulin is the major constituent of microtubules, a cylinder consisting of laterally associated linear protofilaments composed of alpha- and beta-tubulin heterodimers. Microtubules grow by the addition of GTP-tubulin dimers to the microtubule end, where a stabilizing cap forms. Below the cap, tubulin dimers are in GDP-bound state, owing to GTPase activity of alpha-tubulin. This chain is Tubulin beta-1 chain, found in Gallus gallus (Chicken).